We begin with the raw amino-acid sequence, 37 residues long: Potassium channel toxin alpha-KTx 3.9 (37 aa).

Intrachain disulfides connect cysteine 7–cysteine 27, cysteine 13–cysteine 32, and cysteine 17–cysteine 34. The interaction with Ca(2+)-activated K(+) channels stretch occupies residues 25 to 32; it reads GKCMNRKC.

This sequence belongs to the short scorpion toxin superfamily. Potassium channel inhibitor family. Alpha-KTx 03 subfamily. In terms of tissue distribution, expressed by the venom gland.

It localises to the secreted. Functionally, binds and inhibits potassium channels. Intracerebroventricular injection into mice induces paralyzing symptoms followed by death. Its binding affinity to rat brain synaptosomes is 5-fold lower than this of KTX 1. The chain is Potassium channel toxin alpha-KTx 3.9 (KTX3) from Buthus occitanus tunetanus (Common European scorpion).